A 201-amino-acid chain; its full sequence is Ras-related protein Rab-9B (201 aa).

GTP-binding residues include V18, G19, K20, S21, S22, D33, S34, A36, H38, and T39. S21 lines the Mg(2+) pocket. The Switch 1 signature appears at 31–42; the sequence is KFDSQAFHTIGV. S34 is modified (phosphoserine). Positions 39 and 62 each coordinate Mg(2+). The short motif at 64–78 is the Switch 2 element; it reads AGQERFKSLRTPFYR. G65, N124, K125, A155, and K156 together coordinate GTP. Residues C200 and C201 are each lipidated (S-geranylgeranyl cysteine).

It belongs to the small GTPase superfamily. Rab family. Interacts (GTP-bound form) with SGSM1; the GDP-bound form has much lower affinity for SGSM1. The GTP-bound form but not the GDP-bound form interacts with HPS4 and the BLOC-3 complex (heterodimer of HPS1 and HPS4) but does not interact with HPS1 alone. Interacts (GTP-bound form) with NDE1. It depends on Mg(2+) as a cofactor.

It localises to the cell membrane. The protein resides in the cytoplasmic vesicle. The protein localises to the phagosome membrane. The catalysed reaction is GTP + H2O = GDP + phosphate + H(+). With respect to regulation, regulated by guanine nucleotide exchange factors (GEFs) which promote the exchange of bound GDP for free GTP. Regulated by GTPase activating proteins (GAPs) which increase the GTP hydrolysis activity. Inhibited by GDP dissociation inhibitors (GDIs). Its function is as follows. The small GTPases Rab are key regulators of intracellular membrane trafficking, from the formation of transport vesicles to their fusion with membranes. Rabs cycle between an inactive GDP-bound form and an active GTP-bound form that is able to recruit to membranes different sets of downstream effectors directly responsible for vesicle formation, movement, tethering and fusion. RAB9B is involved in the transport of proteins between the endosomes and the trans Golgi network. May use NDE1/NDEL1 as an effector to interact with the dynein motor complex in order to control retrograde trafficking of RAB9-associated late endosomes to the TGN. This chain is Ras-related protein Rab-9B (RAB9B), found in Pongo abelii (Sumatran orangutan).